The primary structure comprises 378 residues: MNKIIIFILFLISILQSVRGFTDTDEIVVLYLEAPLFFSKFGTLLANVNAFHSGLGFYSLNSNETYQVDFVAVPGVLESILPNKIENGEIIWNTSGKVQFSDSIDNTGYWSSEKEIMTINNEIFETFLCWAQNYNESLSYYQLFDVLNRNTNELLVKSVVCNDFVWAGFNALYNLGGKYINDSIIASRDIVTLYTRESIEYVQDGSTNIEVISFYEAMLNISIPKNQTINGLIEELDELFKGNFYLYVNGDYYNVTLDSSPFSFAYSESPLPIGERDLSNITLLESCHFQHSSDNDIILNNKNGIGGWIFIIILLSFTTVYLVGGILINKFKNEKSGLDLIPNKDSWSSLGGLISDGFGFIKSKATGSTSGGNGYSSI.

A signal peptide spans 1-20 (MNKIIIFILFLISILQSVRG). Residues asparagine 63, asparagine 93, asparagine 135, asparagine 181, asparagine 220, asparagine 226, asparagine 254, and asparagine 280 are each glycosylated (N-linked (GlcNAc...) asparagine). Residues 308-328 (WIFIIILLSFTTVYLVGGILI) traverse the membrane as a helical segment.

This sequence belongs to the CLN5 family.

The protein resides in the membrane. This chain is Cln5-like protein 1 (cln5la), found in Dictyostelium discoideum (Social amoeba).